The sequence spans 359 residues: Phospho-N-acetylmuramoyl-pentapeptide-transferase (359 aa).

Helical transmembrane passes span 3–23 (QILIAVGLALAVSILLTPVLI), 55–75 (VAILAGIWVSYLGTHLVGLAL), 84–104 (GLLVLGLATALGIVGFIDDLI), 120–140 (TVGILAAALLFGVLALQFGNA), 156–176 (IATVTLAPLIFVLFCVVLVSA), 187–207 (LDGLAAGAMAMVCAAYVLITF), 231–251 (LALVAAAAAGACIGFLWWNAA), 255–275 (IFMGDTGSLALGGIIAGLSVT), 280–300 (ILAVVLGALFVAEVTSVVVQI), and 334–354 (FWLLTAIACGLGVALFYGEWL).

This sequence belongs to the glycosyltransferase 4 family. MraY subfamily. Mg(2+) is required as a cofactor.

It is found in the cell membrane. The enzyme catalyses UDP-N-acetyl-alpha-D-muramoyl-L-alanyl-gamma-D-glutamyl-meso-2,6-diaminopimeloyl-D-alanyl-D-alanine + di-trans,octa-cis-undecaprenyl phosphate = di-trans,octa-cis-undecaprenyl diphospho-N-acetyl-alpha-D-muramoyl-L-alanyl-D-glutamyl-meso-2,6-diaminopimeloyl-D-alanyl-D-alanine + UMP. The protein operates within cell wall biogenesis; peptidoglycan biosynthesis. Functionally, catalyzes the initial step of the lipid cycle reactions in the biosynthesis of the cell wall peptidoglycan: transfers peptidoglycan precursor phospho-MurNAc-pentapeptide from UDP-MurNAc-pentapeptide onto the lipid carrier undecaprenyl phosphate, yielding undecaprenyl-pyrophosphoryl-MurNAc-pentapeptide, known as lipid I. This is Phospho-N-acetylmuramoyl-pentapeptide-transferase from Mycobacterium sp. (strain JLS).